A 227-amino-acid polypeptide reads, in one-letter code: MLIKNKYKHSMFPVNQNNIIEENEEIKFDLIDTDIEIPFNYLTYILNSTSYITPEILFDGFKVVLPFYQDVQLKPLFELAFDQDVNINSQNKDNGCTFLHYSVEDVKVLYDNIPQFLLEKGADPNIQNKDGNTPLHILINRDFFSSKEIYVAKLLIQYGADIELKNLLGWTPIQCFIQAGNIKLKALLQLVKACKDNDFSKLDITTKDIKEFLDWQISITPENSKFF.

ANK repeat units follow at residues 94-126 (NGCT…DPNI), 130-164 (DGNT…DIEL), and 168-199 (LGWT…DNDF).

This chain is Putative ankyrin repeat protein RF_0314, found in Rickettsia felis (strain ATCC VR-1525 / URRWXCal2) (Rickettsia azadi).